The chain runs to 196 residues: Nodulation protein A (196 aa).

It belongs to the NodA family.

It localises to the cytoplasm. Its function is as follows. N-acyltransferase required for nodulation. Acts in the production of a small, heat-stable compound (Nod) that stimulates mitosis in various plant protoplasts. The polypeptide is Nodulation protein A (Mesorhizobium plurifarium).